The sequence spans 396 residues: 1-deoxy-D-xylulose 5-phosphate reductoisomerase (396 aa).

NADPH contacts are provided by threonine 10, glycine 11, serine 12, isoleucine 13, glycine 36, lysine 37, asparagine 38, and asparagine 124. Position 125 (lysine 125) interacts with 1-deoxy-D-xylulose 5-phosphate. Glutamate 126 contacts NADPH. Aspartate 150 is a binding site for Mn(2+). The 1-deoxy-D-xylulose 5-phosphate site is built by serine 151, glutamate 152, serine 186, and histidine 209. Glutamate 152 provides a ligand contact to Mn(2+). Glycine 215 contributes to the NADPH binding site. 1-deoxy-D-xylulose 5-phosphate is bound by residues serine 222, asparagine 227, lysine 228, and glutamate 231. Glutamate 231 contributes to the Mn(2+) binding site.

Belongs to the DXR family. Requires Mg(2+) as cofactor. The cofactor is Mn(2+).

The enzyme catalyses 2-C-methyl-D-erythritol 4-phosphate + NADP(+) = 1-deoxy-D-xylulose 5-phosphate + NADPH + H(+). It participates in isoprenoid biosynthesis; isopentenyl diphosphate biosynthesis via DXP pathway; isopentenyl diphosphate from 1-deoxy-D-xylulose 5-phosphate: step 1/6. In terms of biological role, catalyzes the NADPH-dependent rearrangement and reduction of 1-deoxy-D-xylulose-5-phosphate (DXP) to 2-C-methyl-D-erythritol 4-phosphate (MEP). The protein is 1-deoxy-D-xylulose 5-phosphate reductoisomerase of Haemophilus ducreyi (strain 35000HP / ATCC 700724).